A 106-amino-acid chain; its full sequence is UPF0060 membrane protein Bphy_5052 (106 aa).

4 consecutive transmembrane segments (helical) span residues 4 to 24, 30 to 50, 58 to 78, and 82 to 102; these read LLLY…PWRW, SVWL…LLTF, VYAA…WCVD, and PSAW…IIAF.

It belongs to the UPF0060 family.

The protein resides in the cell inner membrane. This is UPF0060 membrane protein Bphy_5052 from Paraburkholderia phymatum (strain DSM 17167 / CIP 108236 / LMG 21445 / STM815) (Burkholderia phymatum).